A 398-amino-acid polypeptide reads, in one-letter code: Small ribosomal subunit protein uS3m (398 aa).

This sequence belongs to the universal ribosomal protein uS3 family. Component of the mitochondrial small ribosomal subunit (mt-SSU). Mature yeast 74S mitochondrial ribosomes consist of a small (37S) and a large (54S) subunit. The 37S small subunit contains a 15S ribosomal RNA (15S mt-rRNA) and 34 different proteins. The 54S large subunit contains a 21S rRNA (21S mt-rRNA) and 46 different proteins. uS3m, uS4m and uS5m form the narrow entry site of the mRNA channel.

It localises to the mitochondrion. Functionally, component of the mitochondrial ribosome (mitoribosome), a dedicated translation machinery responsible for the synthesis of mitochondrial genome-encoded proteins, including at least some of the essential transmembrane subunits of the mitochondrial respiratory chain. The mitoribosomes are attached to the mitochondrial inner membrane and translation products are cotranslationally integrated into the membrane. uS3m is essential for mitochondrial protein synthesis and required for the maturation of small ribosomal subunits. The polypeptide is Small ribosomal subunit protein uS3m (VAR1) (Saccharomyces cerevisiae (strain ATCC 204508 / S288c) (Baker's yeast)).